Here is a 746-residue protein sequence, read N- to C-terminus: Serine/threonine-protein kinase SMU1 (746 aa).

Disordered regions lie at residues 1–138 (MSLV…DTLH) and 155–212 (QRSH…GSRN). Composition is skewed to low complexity over residues 15-54 (SSAN…SSTT) and 85-105 (SVSS…PSSA). 3 stretches are compositionally biased toward polar residues: residues 106 to 121 (LPWS…STAT), 128 to 138 (RSNTAGPDTLH), and 156 to 176 (RSHS…SSPT). Basic and acidic residues predominate over residues 194-203 (PSRDRERSRD). In terms of domain architecture, CRIB spans 237–250 (ISTPYDPVHLTHVG). A disordered region spans residues 301 to 451 (GGSDVWKKMG…RRETKKSTIK (151 aa)). Positions 370–380 (PPSNASTSSAD) are enriched in polar residues. Residues 414–430 (SPASRAPDAPAAVSAAS) show a composition bias toward low complexity. The 252-residue stretch at 472-723 (YRSLQKIGQG…ALGMLAHPFL (252 aa)) folds into the Protein kinase domain. ATP is bound by residues 478–486 (IGQGASGGV) and K501. D591 (proton acceptor) is an active-site residue.

Belongs to the protein kinase superfamily. STE Ser/Thr protein kinase family. STE20 subfamily.

Its subcellular location is the cytoplasm. The protein localises to the nucleus. It carries out the reaction L-seryl-[protein] + ATP = O-phospho-L-seryl-[protein] + ADP + H(+). The catalysed reaction is L-threonyl-[protein] + ATP = O-phospho-L-threonyl-[protein] + ADP + H(+). MAP4K component of the MAPK pathway required for the mating pheromone response and the regulation of cell polarity and cell cycle. Phosphorylates histone H2B to form H2BS10ph. This Mycosarcoma maydis (Corn smut fungus) protein is Serine/threonine-protein kinase SMU1 (SMU1).